Reading from the N-terminus, the 327-residue chain is Ribose-phosphate pyrophosphokinase (327 aa).

51–53 (DGE) is an ATP binding site. Mg(2+) contacts are provided by His144 and Asp183. Lys207 is an active-site residue. D-ribose 5-phosphate contacts are provided by residues Arg209, Asp233, and 237–241 (DTGGT).

It belongs to the ribose-phosphate pyrophosphokinase family. Class I subfamily. In terms of assembly, homohexamer. It depends on Mg(2+) as a cofactor.

The protein localises to the cytoplasm. The enzyme catalyses D-ribose 5-phosphate + ATP = 5-phospho-alpha-D-ribose 1-diphosphate + AMP + H(+). It functions in the pathway metabolic intermediate biosynthesis; 5-phospho-alpha-D-ribose 1-diphosphate biosynthesis; 5-phospho-alpha-D-ribose 1-diphosphate from D-ribose 5-phosphate (route I): step 1/1. Involved in the biosynthesis of the central metabolite phospho-alpha-D-ribosyl-1-pyrophosphate (PRPP) via the transfer of pyrophosphoryl group from ATP to 1-hydroxyl of ribose-5-phosphate (Rib-5-P). The chain is Ribose-phosphate pyrophosphokinase from Prochlorococcus marinus (strain SARG / CCMP1375 / SS120).